The sequence spans 588 residues: Putative ABC transporter ATP-binding protein PAM_020 (588 aa).

ABC transporter domains are found at residues 6 to 247 (IIFK…GIQE) and 317 to 551 (LQLQ…TSLN). ATP contacts are provided by residues 40-47 (GKNGSGKS) and 351-358 (GKNGSGKS).

The protein belongs to the ABC transporter superfamily.

The protein localises to the cell membrane. Probably part of an ABC transporter complex. Responsible for energy coupling to the transport system. In Onion yellows phytoplasma (strain OY-M), this protein is Putative ABC transporter ATP-binding protein PAM_020.